A 657-amino-acid chain; its full sequence is KNR4/SMI1 homolog (657 aa).

3 disordered regions span residues 168 to 193 (EQQQRAKSSSELPQTVTPQAVKQKGY), 366 to 402 (SSSVVNRPTPADAAGQARKTQGYSPMVPGASSNESVS), and 416 to 657 (LTQT…TVAL). Residues 174–187 (KSSSELPQTVTPQA) are compositionally biased toward polar residues. Over residues 416 to 436 (LTQTDASSKGTTKPATPNPMT) the composition is skewed to polar residues. Composition is skewed to low complexity over residues 444–455 (STPGSPSAAAEA) and 473–482 (TPTVTKESTP). A compositionally biased stretch (basic and acidic residues) spans 492 to 504 (LDSKNTETNEDTR). Residues 505-521 (ATNTAHSMAPTVSSAIT) show a composition bias toward polar residues. Basic and acidic residues-rich tracts occupy residues 535-561 (KPKDTEKTDDAKDVHEANKQDLTKANE), 569-604 (VEPKDNEVSADSKVKARAESKSDHDSKTNNIPEKKV), and 627-650 (KSDKKAKPAEDPKEHDLKIEKLNE).

Belongs to the KNR4/SMI1 family.

The chain is KNR4/SMI1 homolog from Eremothecium gossypii (strain ATCC 10895 / CBS 109.51 / FGSC 9923 / NRRL Y-1056) (Yeast).